A 278-amino-acid polypeptide reads, in one-letter code: Energy-coupling factor transporter ATP-binding protein EcfA1 (278 aa).

Residues 5-239 (LLLESVSYQY…QDKLEAAGID (235 aa)) enclose the ABC transporter domain. 39–46 (GPNGSGKS) provides a ligand contact to ATP.

This sequence belongs to the ABC transporter superfamily. Energy-coupling factor EcfA family. In terms of assembly, forms a stable energy-coupling factor (ECF) transporter complex composed of 2 membrane-embedded substrate-binding proteins (S component), 2 ATP-binding proteins (A component) and 2 transmembrane proteins (T component).

The protein localises to the cell membrane. Its function is as follows. ATP-binding (A) component of a common energy-coupling factor (ECF) ABC-transporter complex. Unlike classic ABC transporters this ECF transporter provides the energy necessary to transport a number of different substrates. In Halalkalibacterium halodurans (strain ATCC BAA-125 / DSM 18197 / FERM 7344 / JCM 9153 / C-125) (Bacillus halodurans), this protein is Energy-coupling factor transporter ATP-binding protein EcfA1.